Consider the following 280-residue polypeptide: Energy-coupling factor transporter ATP-binding protein EcfA2 (280 aa).

Residues 3-245 enclose the ABC transporter domain; sequence IEFKNVSYTY…VELLESKQLG (243 aa). 40–47 serves as a coordination point for ATP; the sequence is GHTGSGKS.

It belongs to the ABC transporter superfamily. Energy-coupling factor EcfA family. Forms a stable energy-coupling factor (ECF) transporter complex composed of 2 membrane-embedded substrate-binding proteins (S component), 2 ATP-binding proteins (A component) and 2 transmembrane proteins (T component).

The protein resides in the cell membrane. Its function is as follows. ATP-binding (A) component of a common energy-coupling factor (ECF) ABC-transporter complex. Unlike classic ABC transporters this ECF transporter provides the energy necessary to transport a number of different substrates. This Streptococcus agalactiae serotype Ia (strain ATCC 27591 / A909 / CDC SS700) protein is Energy-coupling factor transporter ATP-binding protein EcfA2.